The following is a 372-amino-acid chain: tRNA pseudouridine synthase D (372 aa).

Catalysis depends on aspartate 85, which acts as the Nucleophile. A TRUD domain is found at 160-330 (GFTNYFGYQR…MQGSRRFMWG (171 aa)).

This sequence belongs to the pseudouridine synthase TruD family.

It carries out the reaction uridine(13) in tRNA = pseudouridine(13) in tRNA. Its function is as follows. Responsible for synthesis of pseudouridine from uracil-13 in transfer RNAs. The polypeptide is tRNA pseudouridine synthase D (Campylobacter jejuni subsp. jejuni serotype O:23/36 (strain 81-176)).